The following is a 298-amino-acid chain: NAD kinase (298 aa).

The Proton acceptor role is filled by aspartate 80. NAD(+)-binding positions include 80–81, 154–155, arginine 182, aspartate 184, 195–200, alanine 219, and glutamine 253; these read DG, ND, and TAYALS.

This sequence belongs to the NAD kinase family. A divalent metal cation serves as cofactor.

The protein resides in the cytoplasm. The enzyme catalyses NAD(+) + ATP = ADP + NADP(+) + H(+). Involved in the regulation of the intracellular balance of NAD and NADP, and is a key enzyme in the biosynthesis of NADP. Catalyzes specifically the phosphorylation on 2'-hydroxyl of the adenosine moiety of NAD to yield NADP. This is NAD kinase from Delftia acidovorans (strain DSM 14801 / SPH-1).